Here is a 179-residue protein sequence, read N- to C-terminus: Adenine phosphoribosyltransferase (179 aa).

The protein belongs to the purine/pyrimidine phosphoribosyltransferase family. As to quaternary structure, homodimer.

The protein resides in the cytoplasm. The enzyme catalyses AMP + diphosphate = 5-phospho-alpha-D-ribose 1-diphosphate + adenine. The protein operates within purine metabolism; AMP biosynthesis via salvage pathway; AMP from adenine: step 1/1. Catalyzes a salvage reaction resulting in the formation of AMP, that is energically less costly than de novo synthesis. This Dinoroseobacter shibae (strain DSM 16493 / NCIMB 14021 / DFL 12) protein is Adenine phosphoribosyltransferase.